The sequence spans 265 residues: MRVGVFDSGLGGLTVVQALSRVIKGADIFYVADTKHAPYGEKTPEQILQYSLNITAYFLDEHQIDVLIIACNTATSAAVKTLRERYPELIIIGTEPGIKPALEQTRTKNIGVLATPATLVGEKYQDLVNVLSAKEEVTLYEQACPGLVEQIENGEIESGKTHDMLEGWLHPMRENDVDTIVLGCTHYPLVAHKIEEIMKREMNLIHTGDAIAKRLLALAEEKGYENRGKFSLCIMSTAKIDQEIIKQIIPEYDCFKFISVKTSNF.

Substrate contacts are provided by residues 7 to 8 (DS) and 39 to 40 (YG). Cys-71 functions as the Proton donor/acceptor in the catalytic mechanism. 72-73 (NT) is a substrate binding site. Cys-184 serves as the catalytic Proton donor/acceptor. A substrate-binding site is contributed by 185 to 186 (TH).

Belongs to the aspartate/glutamate racemases family.

The catalysed reaction is L-glutamate = D-glutamate. It participates in cell wall biogenesis; peptidoglycan biosynthesis. Provides the (R)-glutamate required for cell wall biosynthesis. The protein is Glutamate racemase of Sulfurovum sp. (strain NBC37-1).